The primary structure comprises 819 residues: Zinc finger protein with KRAB and SCAN domains 5 (819 aa).

Positions 51–132 (QRFKHFQYHE…AVIESIQREL (82 aa)) constitute an SCAN box domain. Glycyl lysine isopeptide (Lys-Gly) (interchain with G-Cter in SUMO2) cross-links involve residues Lys-214, Lys-246, and Lys-302. The 72-residue stretch at 216-287 (EDVADVAVSF…HWVAAERTEK (72 aa)) folds into the KRAB domain. Disordered regions lie at residues 236–263 (SQKS…KEGN) and 283–340 (ERTE…GERG). Over residues 240–249 (LGRDSRKEDC) the composition is skewed to basic and acidic residues. Residues 329 to 340 (VNRKQKSNGERG) show a composition bias toward basic and acidic residues. C2H2-type zinc fingers lie at residues 341–363 (HRCG…RRIH), 369–391 (FKCG…QRVH), 397–419 (YKCQ…HSVH), 425–447 (YGCN…LKRH), 540–562 (HQCN…RRIH), 568–590 (FRCE…HRVH), 596–618 (YACH…QSVH), 624–646 (FKCN…LRLH), and 652–674 (HQCH…QVLH). Residue Lys-700 forms a Glycyl lysine isopeptide (Lys-Gly) (interchain with G-Cter in SUMO2) linkage. 3 consecutive C2H2-type zinc fingers follow at residues 708-730 (YQCD…YRTH), 764-786 (HQCN…QRIH), and 792-814 (LQCK…LRSH). Residue Lys-776 forms a Glycyl lysine isopeptide (Lys-Gly) (interchain with G-Cter in SUMO2) linkage.

It belongs to the krueppel C2H2-type zinc-finger protein family. As to expression, testis specific.

The protein localises to the nucleus. May be involved in transcriptional regulation. This chain is Zinc finger protein with KRAB and SCAN domains 5 (Zkscan5), found in Mus musculus (Mouse).